A 237-amino-acid polypeptide reads, in one-letter code: UPF0173 metal-dependent hydrolase BCAN_B0597 (237 aa).

Belongs to the UPF0173 family.

This Brucella canis (strain ATCC 23365 / NCTC 10854 / RM-666) protein is UPF0173 metal-dependent hydrolase BCAN_B0597.